Here is a 1241-residue protein sequence, read N- to C-terminus: RNA polymerase II C-terminal domain phosphatase-like 3 (1241 aa).

Disordered regions lie at residues 361–402 (DHDA…TTEG), 428–470 (VFKT…HLIY), 505–525 (ISAP…RDPR), 578–598 (KRQK…WLED), 677–702 (AIQK…VSTP), 720–800 (VLQD…QNGT), and 852–885 (TERD…GPTR). A compositionally biased stretch (polar residues) spans 368–378 (PSPTRETTPSL). Over residues 441 to 466 (GEPNDGNGDVGGEVSSSVVKSSNPGS) the composition is skewed to low complexity. The segment covering 677–686 (AIQKPMDPRR) has biased composition (basic and acidic residues). Composition is skewed to polar residues over residues 691-702 (PGSSVQPGVSTP) and 791-800 (PRQNISQNGT). A compositionally biased stretch (low complexity) spans 871–881 (SVSAASVTAAA). The region spanning 923-1103 (FASQKLSLVL…GLLGPSLLEL (181 aa)) is the FCP1 homology domain. One can recognise a BRCT domain in the interval 1146–1239 (EQRKILAGCR…QRANENLYAI (94 aa)).

Interacts with RAP74. Mg(2+) is required as a cofactor. The cofactor is Co(2+). It depends on Mn(2+) as a cofactor.

Its subcellular location is the nucleus. The catalysed reaction is O-phospho-L-seryl-[protein] + H2O = L-seryl-[protein] + phosphate. It carries out the reaction O-phospho-L-threonyl-[protein] + H2O = L-threonyl-[protein] + phosphate. In terms of biological role, completely dephosphorylates 'Ser-2', and partially 'Ser-5' and 'Ser-7' of the heptad repeats YSPTSPS in the C-terminal domain (CTD) of the largest RNA polymerase II subunit (RPB1). Involved in defense response. Acts as a negative regulator of immune gene expression and immunity to pathogen infections. Preferentially dephosphorylates 'Ser-2' of RNA polymerase II CTD. This counterregulates the MAP kinase (MAPK) or cyclin-dependent kinase C (CDKC)-mediated phosphorylation of CTD in response to pathogens and upon perception of microbe-associated molecular patterns (MAMPs). MAPKs phosphorylate and activate CDKCs, which are CTD kinases that positively regulate plant innate immunity. Acts as a negative regulator of stress gene transcription involved in abscisic acid (ABA) mediated signaling pathway and cold resistance. Acts as a post-transcriptional gene silencing (PTGS) suppressor. This Arabidopsis thaliana (Mouse-ear cress) protein is RNA polymerase II C-terminal domain phosphatase-like 3.